Here is a 422-residue protein sequence, read N- to C-terminus: Enolase (422 aa).

Position 162 (Gln-162) interacts with (2R)-2-phosphoglycerate. Glu-204 functions as the Proton donor in the catalytic mechanism. The Mg(2+) site is built by Asp-241, Glu-284, and Asp-311. Residues Lys-336, Arg-365, Ser-366, and Lys-387 each contribute to the (2R)-2-phosphoglycerate site. Lys-336 serves as the catalytic Proton acceptor.

It belongs to the enolase family. It depends on Mg(2+) as a cofactor.

It is found in the cytoplasm. The protein resides in the secreted. It localises to the cell surface. The catalysed reaction is (2R)-2-phosphoglycerate = phosphoenolpyruvate + H2O. It functions in the pathway carbohydrate degradation; glycolysis; pyruvate from D-glyceraldehyde 3-phosphate: step 4/5. Catalyzes the reversible conversion of 2-phosphoglycerate (2-PG) into phosphoenolpyruvate (PEP). It is essential for the degradation of carbohydrates via glycolysis. The sequence is that of Enolase from Thermus thermophilus (strain ATCC 27634 / DSM 579 / HB8).